Consider the following 121-residue polypeptide: Small ribosomal subunit protein bS6 (121 aa).

Belongs to the bacterial ribosomal protein bS6 family.

Functionally, binds together with bS18 to 16S ribosomal RNA. The sequence is that of Small ribosomal subunit protein bS6 (rpsF) from Rickettsia prowazekii (strain Madrid E).